The following is a 126-amino-acid chain: Profilin (126 aa).

It belongs to the profilin family. Occurs in many kinds of cells as a complex with monomeric actin in a 1:1 ratio.

It localises to the cytoplasm. The protein resides in the cytoskeleton. Its function is as follows. Binds to actin and affects the structure of the cytoskeleton. At high concentrations, profilin prevents the polymerization of actin, whereas it enhances it at low concentrations. By binding to PIP2, it inhibits the formation of IP3 and DG. This is Profilin from Branchiostoma belcheri (Amphioxus).